A 337-amino-acid chain; its full sequence is tRNA N6-adenosine threonylcarbamoyltransferase (337 aa).

The Fe cation site is built by His110 and His114. Substrate is bound by residues 133–137, Asp166, Gly179, Asp183, and Asn276; that span reads MVSGG. Asp302 lines the Fe cation pocket.

It belongs to the KAE1 / TsaD family. It depends on Fe(2+) as a cofactor.

The protein localises to the cytoplasm. The enzyme catalyses L-threonylcarbamoyladenylate + adenosine(37) in tRNA = N(6)-L-threonylcarbamoyladenosine(37) in tRNA + AMP + H(+). Functionally, required for the formation of a threonylcarbamoyl group on adenosine at position 37 (t(6)A37) in tRNAs that read codons beginning with adenine. Is involved in the transfer of the threonylcarbamoyl moiety of threonylcarbamoyl-AMP (TC-AMP) to the N6 group of A37, together with TsaE and TsaB. TsaD likely plays a direct catalytic role in this reaction. The protein is tRNA N6-adenosine threonylcarbamoyltransferase of Fervidobacterium nodosum (strain ATCC 35602 / DSM 5306 / Rt17-B1).